A 194-amino-acid chain; its full sequence is Type II methyltransferase M.MjaVI (194 aa).

Belongs to the N(4)/N(6)-methyltransferase family. N(4) subfamily.

The catalysed reaction is a 2'-deoxycytidine in DNA + S-adenosyl-L-methionine = an N(4)-methyl-2'-deoxycytidine in DNA + S-adenosyl-L-homocysteine + H(+). Functionally, a beta subtype methylase that recognizes the double-stranded sequence 5'-CCGG-3', methylates C-1 on both strands, and protects the DNA from cleavage by the MjaVI endonuclease. In Methanocaldococcus jannaschii (strain ATCC 43067 / DSM 2661 / JAL-1 / JCM 10045 / NBRC 100440) (Methanococcus jannaschii), this protein is Type II methyltransferase M.MjaVI (mjaVIM).